Here is a 214-residue protein sequence, read N- to C-terminus: Ras-related protein RABA5c (214 aa).

19–26 (GDSAVGKS) is a binding site for GTP. Residues 41–49 (SKATIGVEF) carry the Effector region motif. Residues 67–71 (DTAGQ), 125–128 (NKCD), and 155–156 (SA) contribute to the GTP site. 2 S-geranylgeranyl cysteine lipidation sites follow: C211 and C212.

It belongs to the small GTPase superfamily. Rab family. As to quaternary structure, interacts (via C-terminus) with GDI1. Interacts with PUX8/SAY1. In terms of tissue distribution, expressed in roots and actively dividing cells.

The protein localises to the golgi apparatus membrane. Its subcellular location is the golgi apparatus. The protein resides in the trans-Golgi network membrane. It is found in the cell membrane. Functionally, intracellular vesicle trafficking and protein transport. Binds GTP and GDP and possesses intrinsic GTPase activity. The chain is Ras-related protein RABA5c (RABA5C) from Arabidopsis thaliana (Mouse-ear cress).